Here is a 538-residue protein sequence, read N- to C-terminus: Neutral protease B (538 aa).

The first 28 residues, 1 to 28 (MRNLTKTSLLLAGLCTAAQMVFVTHASA), serve as a signal peptide directing secretion. The propeptide at 29–223 (EESIEYDHTY…VIESFNAIHE (195 aa)) is activation peptide. Aspartate 365 is a binding site for Ca(2+). Histidine 369 lines the Zn(2+) pocket. Glutamate 370 is an active-site residue. Zn(2+) contacts are provided by histidine 373 and glutamate 393. The Ca(2+) site is built by aspartate 404, aspartate 406, aspartate 407, glutamate 409, glutamate 412, tyrosine 415, threonine 416, isoleucine 419, and aspartate 422. Positions 421–441 (GDSLRSLEDPSKQGNPDHYSN) are disordered. Histidine 453 functions as the Proton donor in the catalytic mechanism.

It belongs to the peptidase M4 family. It depends on Zn(2+) as a cofactor.

Its subcellular location is the secreted. Protease activity can be inhibited in vitro by either a zinc specific chelator, 1,10-phenanthroline, or a metal chelator, EDTA. The enzyme is resistant to phenylmethylsulfonyl fluoride and iodoacetic acid. Its function is as follows. Protease able to cleave casein in vitro. The protein is Neutral protease B of Bacillus subtilis (strain 168).